A 528-amino-acid chain; its full sequence is Butyrophilin subfamily 2 member A2 (528 aa).

The N-terminal stretch at 1 to 29 is a signal peptide; sequence MESAAALHFSRPASLLLLLLLSLCALVSA. Topologically, residues 30–249 are extracellular; that stretch reads QVTVVGPTDP…SFMPSVSPCA (220 aa). The Ig-like V-type domain occupies 31–142; the sequence is VTVVGPTDPI…SYDEAILHLI (112 aa). N-linked (GlcNAc...) asparagine glycans are attached at residues Asn-47, Asn-115, and Asn-121. An intrachain disulfide couples Cys-52 to Cys-126. Residues 150 to 232 form the Ig-like C2-type domain; sequence PLIEMRGHED…NNTLLSQKKE (83 aa). A helical membrane pass occupies residues 250–270; sequence VALPIVVVILMILFAVCMYWI. Positions 270–320 form a coiled coil; the sequence is INKLQKEKKILSGEKEFERETREIAVKELEKERVQKEEELQVKEKLQEELR. At 271–528 the chain is on the cytoplasmic side; that stretch reads NKLQKEKKIL…LHRVGTHQSL (258 aa). Residues 311 to 507 form the B30.2/SPRY domain; the sequence is VKEKLQEELR…IFICPALTGA (197 aa).

It belongs to the immunoglobulin superfamily. BTN/MOG family. N-glycosylated.

The protein resides in the membrane. Inhibits the proliferation of CD4 and CD8 T-cells activated by anti-CD3 antibodies, T-cell metabolism and IL2 and IFNG secretion. This is Butyrophilin subfamily 2 member A2 (BTN2A2) from Pongo abelii (Sumatran orangutan).